The following is a 591-amino-acid chain: Monoterpene synthase 8, chloroplastic (591 aa).

A chloroplast-targeting transit peptide spans M1–S46. Positions 346, 350, and 497 each coordinate Mg(2+). A DDXXD motif motif is present at residues D346–D350.

Belongs to the terpene synthase family. Tpsa subfamily. Mg(2+) is required as a cofactor. Mn(2+) serves as cofactor. Highly expressed in flowers, petals and sepals, but almost undetectable in vegetative organs.

The protein resides in the plastid. It localises to the chloroplast. It catalyses the reaction (2E)-geranyl diphosphate + H2O = (R)-linalool + diphosphate. It carries out the reaction (2E)-geranyl diphosphate + H2O = (S)-linalool + diphosphate. The catalysed reaction is (2E,6E)-farnesyl diphosphate = (S)-beta-bisabolene + diphosphate. The enzyme catalyses (2E,6E)-farnesyl diphosphate = (E,R)-alpha-bisabolene + diphosphate. It catalyses the reaction (2E,6E)-farnesyl diphosphate = (E)-beta-farnesene + diphosphate. It carries out the reaction (2E,6E)-farnesyl diphosphate = beta-sesquiphellandrene + diphosphate. The catalysed reaction is (2E,6E)-farnesyl diphosphate = (1S,5S,6R)-alpha-bergamotene + diphosphate. Its pathway is secondary metabolite biosynthesis; terpenoid biosynthesis. Its function is as follows. Sesquiterpene and monoterpene synthase involved in the biosynthesis of volatile compounds present in floral scent. Mediates the conversion of (2E)-geranyl diphosphate (GPP) into linalool, with trace levels of myrcene, limonene and (Z)-beta-ocimene. Also acts as a sesquiterpene synthase by catalyzing the conversion of farnesyl diphosphate (FPP) to alpha-bergamotene and beta-bisabolene and to minor products including alpha-curcumene, cis-alpha-bisabolene, beta-farnesene and beta-sesquiphellandrene, as well as seven other unidentified sesquiterpenes. This Hedychium coronarium (White butterfly ginger-lily) protein is Monoterpene synthase 8, chloroplastic.